Consider the following 520-residue polypeptide: BTB/POZ domain-containing protein At3g50780 (520 aa).

Positions 43 to 68 are disordered; that stretch reads SHNSLTKHKQSSPALQPPKPEKKPSS. In terms of domain architecture, BTB spans 127–196; that stretch reads AKVILVGKQG…MYCKDMKQRL (70 aa).

The protein operates within protein modification; protein ubiquitination. May act as a substrate-specific adapter of an E3 ubiquitin-protein ligase complex (CUL3-RBX1-BTB) which mediates the ubiquitination and subsequent proteasomal degradation of target proteins. The polypeptide is BTB/POZ domain-containing protein At3g50780 (Arabidopsis thaliana (Mouse-ear cress)).